Here is a 353-residue protein sequence, read N- to C-terminus: S-adenosylmethionine:tRNA ribosyltransferase-isomerase (353 aa).

Belongs to the QueA family. In terms of assembly, monomer.

It localises to the cytoplasm. It carries out the reaction 7-aminomethyl-7-carbaguanosine(34) in tRNA + S-adenosyl-L-methionine = epoxyqueuosine(34) in tRNA + adenine + L-methionine + 2 H(+). It participates in tRNA modification; tRNA-queuosine biosynthesis. Its function is as follows. Transfers and isomerizes the ribose moiety from AdoMet to the 7-aminomethyl group of 7-deazaguanine (preQ1-tRNA) to give epoxyqueuosine (oQ-tRNA). The sequence is that of S-adenosylmethionine:tRNA ribosyltransferase-isomerase from Sodalis glossinidius (strain morsitans).